A 101-amino-acid chain; its full sequence is Small ribosomal subunit protein uS14 (101 aa).

This sequence belongs to the universal ribosomal protein uS14 family. In terms of assembly, part of the 30S ribosomal subunit. Contacts proteins S3 and S10.

Functionally, binds 16S rRNA, required for the assembly of 30S particles and may also be responsible for determining the conformation of the 16S rRNA at the A site. This Cupriavidus metallidurans (strain ATCC 43123 / DSM 2839 / NBRC 102507 / CH34) (Ralstonia metallidurans) protein is Small ribosomal subunit protein uS14.